Reading from the N-terminus, the 1203-residue chain is DNA-directed RNA polymerase subunit beta' (1203 aa).

Positions 60, 62, 75, and 78 each coordinate Zn(2+). 3 residues coordinate Mg(2+): aspartate 449, aspartate 451, and aspartate 453. 4 residues coordinate Zn(2+): cysteine 818, cysteine 892, cysteine 899, and cysteine 902.

The protein belongs to the RNA polymerase beta' chain family. In terms of assembly, the RNAP catalytic core consists of 2 alpha, 1 beta, 1 beta' and 1 omega subunit. When a sigma factor is associated with the core the holoenzyme is formed, which can initiate transcription. Mg(2+) is required as a cofactor. Requires Zn(2+) as cofactor.

The catalysed reaction is RNA(n) + a ribonucleoside 5'-triphosphate = RNA(n+1) + diphosphate. Its function is as follows. DNA-dependent RNA polymerase catalyzes the transcription of DNA into RNA using the four ribonucleoside triphosphates as substrates. In Bacillus cereus (strain ZK / E33L), this protein is DNA-directed RNA polymerase subunit beta'.